Consider the following 90-residue polypeptide: Essential MCU regulator, mitochondrial (90 aa).

Residues 49–68 (GVLKLIFVSASSLYIGGLIA) form a helical membrane-spanning segment.

It belongs to the SMDT1/EMRE family.

The protein localises to the mitochondrion inner membrane. Essential regulatory subunit of the mitochondrial calcium uniporter (mcu-1) channel, a protein that mediates calcium uptake into mitochondria. This chain is Essential MCU regulator, mitochondrial, found in Caenorhabditis elegans.